The sequence spans 201 residues: dCTP deaminase, dUMP-forming (201 aa).

DCTP-binding positions include 101–106, aspartate 119, 127–129, glutamine 148, tyrosine 162, and glutamine 174; these read KSSLGR and TLE. The active-site Proton donor/acceptor is the glutamate 129.

Belongs to the dCTP deaminase family. As to quaternary structure, homotrimer.

It catalyses the reaction dCTP + 2 H2O = dUMP + NH4(+) + diphosphate. The protein operates within pyrimidine metabolism; dUMP biosynthesis; dUMP from dCTP: step 1/1. Its function is as follows. Bifunctional enzyme that catalyzes both the deamination of dCTP to dUTP and the hydrolysis of dUTP to dUMP without releasing the toxic dUTP intermediate. The polypeptide is dCTP deaminase, dUMP-forming (Clavibacter michiganensis subsp. michiganensis (strain NCPPB 382)).